A 270-amino-acid chain; its full sequence is Endochitinase PR4 (270 aa).

The signal sequence occupies residues 1-23 (MGNKLVLVLVAVALVMGPKNVSA). The region spanning 24-58 (QNCGCAEGLCCSQYGYCGTGEDYCGTGCQQGPCTT) is the Chitin-binding type-1 domain. 7 disulfide bridges follow: Cys-26/Cys-34, Cys-28/Cys-40, Cys-33/Cys-47, Cys-51/Cys-56, Cys-88/Cys-137, Cys-150/Cys-160, and Cys-238/Cys-270. The Proton donor role is filled by Glu-132.

Belongs to the glycosyl hydrolase 19 family. Chitinase class I subfamily.

It carries out the reaction Random endo-hydrolysis of N-acetyl-beta-D-glucosaminide (1-&gt;4)-beta-linkages in chitin and chitodextrins.. Functionally, defense against chitin-containing fungal pathogens. This chain is Endochitinase PR4 (CHI4), found in Phaseolus vulgaris (Kidney bean).